Consider the following 591-residue polypeptide: Probable translation initiation factor IF-2 (591 aa).

Residues 7–223 (LRTPIVCVMG…LLGLAQRFLE (217 aa)) enclose the tr-type G domain. The interval 16 to 23 (GHVDHGKT) is G1. 16-23 (GHVDHGKT) contributes to the GTP binding site. The tract at residues 41–45 (AITQH) is G2. Residues 78–81 (DTPG) form a G3 region. GTP-binding positions include 78-82 (DTPGH) and 132-135 (NKID). The tract at residues 132–135 (NKID) is G4. Residues 200 to 202 (SAI) are G5.

Belongs to the TRAFAC class translation factor GTPase superfamily. Classic translation factor GTPase family. IF-2 subfamily.

Function in general translation initiation by promoting the binding of the formylmethionine-tRNA to ribosomes. Seems to function along with eIF-2. This is Probable translation initiation factor IF-2 from Methanococcoides burtonii (strain DSM 6242 / NBRC 107633 / OCM 468 / ACE-M).